A 310-amino-acid polypeptide reads, in one-letter code: L-lactate dehydrogenase (310 aa).

Residues Val-11, Asp-32, Tyr-62, and 76 to 77 contribute to the NAD(+) site; that span reads GV. Residues Gln-79, Arg-85, and 117–120 each bind substrate; that span reads NPVD. NAD(+)-binding positions include 115-117 and Ser-140; that span reads ATN. Residue 145-148 coordinates substrate; it reads DTAR. 2 residues coordinate beta-D-fructose 1,6-bisphosphate: Arg-150 and His-165. His-172 serves as the catalytic Proton acceptor. Tyr-218 carries the post-translational modification Phosphotyrosine. Thr-227 provides a ligand contact to substrate.

Belongs to the LDH/MDH superfamily. LDH family. As to quaternary structure, homotetramer.

The protein localises to the cytoplasm. The enzyme catalyses (S)-lactate + NAD(+) = pyruvate + NADH + H(+). It functions in the pathway fermentation; pyruvate fermentation to lactate; (S)-lactate from pyruvate: step 1/1. With respect to regulation, activated by citrate at pH 5. Allosterically activated by fructose 1,6-bisphosphate (FBP) at pH from 5.8 to 7.2. Functionally, catalyzes the conversion of lactate to pyruvate. The sequence is that of L-lactate dehydrogenase from Thermus aquaticus.